The primary structure comprises 50 residues: Inter-alpha-trypsin inhibitor heavy chain H2 (50 aa).

The protein belongs to the ITIH family. I-alpha-I plasma protease inhibitors are assembled from one or two heavy chains (HC) and one light chain, bikunin. Inter-alpha-inhibitor (I-alpha-I) is composed of ITIH1/HC1, ITIH2/HC2 and bikunin. Post-translationally, phosphorylated by FAM20C in the extracellular medium.

It localises to the secreted. Functionally, may act as a carrier of hyaluronan in serum or as a binding protein between hyaluronan and other matrix protein, including those on cell surfaces in tissues to regulate the localization, synthesis and degradation of hyaluronan which are essential to cells undergoing biological processes. In Bos taurus (Bovine), this protein is Inter-alpha-trypsin inhibitor heavy chain H2 (ITIH2).